A 1342-amino-acid polypeptide reads, in one-letter code: DNA-directed RNA polymerase subunit beta (1342 aa).

This sequence belongs to the RNA polymerase beta chain family. As to quaternary structure, the RNAP catalytic core consists of 2 alpha, 1 beta, 1 beta' and 1 omega subunit. When a sigma factor is associated with the core the holoenzyme is formed, which can initiate transcription.

It carries out the reaction RNA(n) + a ribonucleoside 5'-triphosphate = RNA(n+1) + diphosphate. Its function is as follows. DNA-dependent RNA polymerase catalyzes the transcription of DNA into RNA using the four ribonucleoside triphosphates as substrates. In Salmonella gallinarum (strain 287/91 / NCTC 13346), this protein is DNA-directed RNA polymerase subunit beta.